We begin with the raw amino-acid sequence, 238 residues long: Cysteine-rich venom protein (238 aa).

A signal peptide spans 1–19 (MIAFIVLLSLAAVLQQSSG). The SCP domain occupies 38–164 (VDKHNALRRS…STKYLYVCQY (127 aa)). 8 disulfides stabilise this stretch: C75/C153, C92/C165, C148/C162, C184/C191, C187/C196, C200/C233, C209/C227, and C218/C231. In terms of domain architecture, ShKT spans 200 to 233 (CKYEDAFTNCKALAKKTKCKTEWIKSKCPATCFC).

It belongs to the CRISP family. In terms of tissue distribution, expressed by the venom gland.

Its subcellular location is the secreted. In terms of biological role, blocks contraction of smooth muscle elicited by high potassium-induced depolarization, but does not block caffeine-stimulated contraction. May target voltage-gated calcium channels on smooth muscle. The polypeptide is Cysteine-rich venom protein (Austrelaps superbus (Lowland copperhead snake)).